The primary structure comprises 519 residues: MTKMTSIIGILMGVLTTATAASIPTGSSAAAAAALGSLGVSPPSGNVLIGNAGYTCSLLNRVLSKNETFTVTSPYYDVLIDEAWSENCRLNASCIVTPESAEEVSRLLQILSILETRFAIRSGGHNTNPGFSSIGSDGVLIALEKLDSISLSADRGTVTVGPGNKWESVYKYLQPYNLTALGGREAVVGVGGYILGETGGLSTFYNTHGLAIDSVTRFQVVLPNGTIVDATPTEHADLYKGLKGGLNNFGIVTEYDLTTNTGVDIYYEIKTYTTANTPAVLAAYATYLLDADINSNVEIQINPSYTLVFYGYLGHVSAPTDFDPFSDIPVASTMYPPTNGSLTELLLSIGSTGLTSEGVSYSGTFSFKVTGSTFLQDTYSTYLEAAASLPTGAVLSYVPQGVIPNLVTQGKSQNGGNLLGLDATPQVWANIFVQFPATLSQSEVAGSVDSLLANLISSAKSEDLFLPYIFVNDAGAKQKPLQSFGEKNIKYIDTVAKRYDPKRIMQRLQNQAYFVLEEL.

A signal peptide spans 1 to 20; the sequence is MTKMTSIIGILMGVLTTATA. An FAD-binding PCMH-type domain is found at 88–262; sequence CRLNASCIVT…TEYDLTTNTG (175 aa). His-125 carries the pros-8alpha-FAD histidine modification.

It belongs to the oxygen-dependent FAD-linked oxidoreductase family.

The protein operates within secondary metabolite biosynthesis; terpenoid biosynthesis. Its function is as follows. FAD-dependent monooxygenase; part of the gene cluster that mediates the biosynthesis of macrophorins, isoprenoid epoxycyclohexenones containing cyclized drimane moieties. The first step of the pathway is the synthesis of 6-methylsalicylic acid (6-MSA) by the polyketide synthase macA. 6-MSA is then converted to m-cresol by the decarboxylase macB. The cytochrome P450 monooxygenase macC then catalyzes the oxidation of m-cresol to toluquinol. Epoxidation of toluquinol is then performed by the short chain dehydrogenase macD, with the help of macE, and a further prenylation by macG leads to 7-deacetoxyyanuthone A. The next step is the hydroxylation of C-22 of 7-deacetoxyyanuthone A by the cytochrome P450 monooxygenase macH to yield 22-deacetylyanuthone A. O-Mevalon transferase macI then attaches mevalon to the hydroxyl group of 22-deacetylyanuthone A to produce yanuthone E. The terpene cyclase macJ catalyzes the cyclization of 22-deacetylyanuthone A to macrophorin A. MacJ is also able to catalyze cyclization of yanuthone E and 7-deacetoxyyanuthone A to their corresponding macrophorins. The macJ products can be further modified by macH and macJ, as well as by the FAD-dependent monooxygenase macF, to produce additional macrophorins, including 4'-oxomacrophorin A, 4'-oxomacrophorin D and 4'-oxomacrophorin E. In Penicillium terrestre, this protein is FAD-dependent monooxygenase macF.